The chain runs to 1065 residues: Alpha-L-arabinofuranosidase (1065 aa).

An N-terminal signal peptide occupies residues 1 to 26 (MKHWKKMAASLIAISTMVAVVPTTYA). The BIG2 domain maps to 277-346 (VVNNKLTLIE…TTELGGVKAE (70 aa)). The segment at 997–1031 (KAPTNPGEGDGDKGDGNKPTTPTTGDKTNVNKPGS) is disordered. Residues 1014–1031 (KPTTPTTGDKTNVNKPGS) show a composition bias toward polar residues. A helical transmembrane segment spans residues 1040–1060 (VLGLGGAVVALAIAGISLTLW).

The protein belongs to the glycosyl hydrolase 43 family.

The protein localises to the cell membrane. It catalyses the reaction Hydrolysis of terminal non-reducing alpha-L-arabinofuranoside residues in alpha-L-arabinosides.. Involved in the type II arabinogalactan (AG) side chains degradation. Releases arabinofuranose (Araf) from alpha-1,3-Araf-substituted beta-1,6-galactooligosaccharides. Can use radish root AGP, larch AG and arabinan. Shows weaker activity with gum arabic and arabinoxylan. This chain is Alpha-L-arabinofuranosidase, found in Bifidobacterium longum subsp. longum (strain ATCC 15707 / DSM 20219 / JCM 1217 / NCTC 11818 / E194b).